The chain runs to 150 residues: Large ribosomal subunit protein bL9 (150 aa).

The protein belongs to the bacterial ribosomal protein bL9 family.

Functionally, binds to the 23S rRNA. In Wolinella succinogenes (strain ATCC 29543 / DSM 1740 / CCUG 13145 / JCM 31913 / LMG 7466 / NCTC 11488 / FDC 602W) (Vibrio succinogenes), this protein is Large ribosomal subunit protein bL9.